The following is an 849-amino-acid chain: Putative respiratory burst oxidase homolog protein G (849 aa).

Over residues 1-17 the composition is skewed to basic and acidic residues; the sequence is MQRVSFEVKDTEAEKSS. The disordered stretch occupies residues 1–53; the sequence is MQRVSFEVKDTEAEKSSSEILSGSLPSTYRNPAMENVGNAVDDGSSVKNNPKL. Over 1 to 303 the chain is Cytoplasmic; it reads MQRVSFEVKD…RFFVLDSWQR (303 aa). Residues 18–27 show a composition bias toward low complexity; sequence SEILSGSLPS. EF-hand-like regions lie at residues 118–128 and 153–164; these read TANTDGLLLRS and SHLKGDVITETE. 2 EF-hand domains span residues 176-211 and 220-255; these read SFDSRLITFFDLMDKDSDGRLTEDEVREIIKLSSSA and KADEYAAMIMEELDPDHMGYIMMESLKKLLLQAETK. D189, D191, D193, R195, and E200 together coordinate Ca(2+). At S270 the chain carries Phosphoserine. The chain crosses the membrane as a helical span at residues 304–324; the sequence is VWVIALWLTIMAILFAYKYIQ. The Extracellular segment spans residues 325 to 392; the sequence is YKNRAVYEVL…LNFHKVIAVG (68 aa). Residues 342 to 502 form the Ferric oxidoreductase domain; sequence KGAAETLKLN…LFVIVYILLV (161 aa). The chain crosses the membrane as a helical span at residues 393–409; the sequence is IAIGVAIHSVSHLACDF. The Cytoplasmic portion of the chain corresponds to 410–444; it reads PLLIAATPAEYMPLGKFFGEEQPKRYLHFVKSTEG. The chain crosses the membrane as a helical span at residues 445–465; it reads ITGLVMVFLMVIAFTLAMPWF. The Extracellular segment spans residues 466–489; the sequence is RRGKLEKKLPGPLKKLASFNAFWY. The helical transmembrane segment at 490–510 threads the bilayer; it reads THHLFVIVYILLVLHGYYIYL. Topologically, residues 511 to 518 are cytoplasmic; that stretch reads NKEWYKKT. A helical membrane pass occupies residues 519-536; sequence TWMYLAVPVALYAYERLI. Residues 537–659 are Extracellular-facing; sequence RAFRSSIRTV…PYGAPAQDYK (123 aa). An FAD-binding FR-type domain is found at 541 to 657; that stretch reads SSIRTVKVLK…DGPYGAPAQD (117 aa). A helical transmembrane segment spans residues 660–680; the sequence is KYEVVLLIGLGIGATPMISII. Topologically, residues 681–849 are cytoplasmic; sequence KDIINNTETK…TRFSFHKENF (169 aa).

The protein belongs to the RBOH (TC 5.B.1.3) family. As to quaternary structure, monomer and homodimer.

It localises to the membrane. Its function is as follows. Calcium-dependent NADPH oxidase that generates superoxide. This chain is Putative respiratory burst oxidase homolog protein G (RBOHG), found in Arabidopsis thaliana (Mouse-ear cress).